The following is a 1444-amino-acid chain: ABC transporter G family member 39 (1444 aa).

A disordered region spans residues 1-36; that stretch reads MDIVRMGSVASGGGSVRRTASSWRGTSGRSDAFGRS. Residues 19–29 show a composition bias toward polar residues; it reads TASSWRGTSGR. Residues 154–426 enclose the ABC transporter 1 domain; sequence LSAMRIVSSG…FEAMGFKCPE (273 aa). Position 187–194 (187–194) interacts with ATP; it reads GPPGSGKT. The 214-residue stretch at 504 to 717 folds into the ABC transmembrane type-2 1 domain; the sequence is ELTKACFSRE…AQNAIAVNEF (214 aa). The next 6 helical transmembrane spans lie at 522-542, 555-575, 610-630, 642-662, 667-687, and 754-774; these read FVYIFKILQLIILGSIGMTVF, GAIFLGAMFLGLVTHLFNGFA, IPISFLECAVWICMTYYVMGF, VLLVLISQMASGLFRLLAALG, VADTFGSFAQLILLVLGGFLI, and IGVGALLGYIMLFNILFILFL. Residues 846–1098 form the ABC transporter 2 domain; sequence ITFDNIRYSV…HLINYFEGIQ (253 aa). 891–898 serves as a coordination point for ATP; it reads GVSGAGKT. The ABC transmembrane type-2 2 domain maps to 1171–1385; the sequence is TQCMACLWKQ…TLYGLVASQY (215 aa). A run of 7 helical transmembrane segments spans residues 1192–1212, 1220–1240, 1278–1298, 1305–1325, 1335–1355, 1362–1382, and 1414–1434; these read ATRIFFTTVIALIFGTIFLNL, LDLFNSLGSMYAAVLFIGIQN, IPHIFLQTVVYGLIVYSLIGF, FFWYMFFMFFTFMYFTFYGMM, IAAIVSTAFYCIWNIFAGFLI, IWWRWYSWACPVAWTLYGLVA, and LGYVATAVVGFAALFAFVFAF.

The protein belongs to the ABC transporter superfamily. ABCG family. PDR (TC 3.A.1.205) subfamily.

The protein localises to the membrane. In terms of biological role, may be a general defense protein. In Oryza sativa subsp. japonica (Rice), this protein is ABC transporter G family member 39.